The sequence spans 1284 residues: ABC multidrug transporter atrC (1284 aa).

Basic and acidic residues predominate over residues 1 to 11; that stretch reads MKSTAESKETP. The interval 1-24 is disordered; it reads MKSTAESKETPSQDESTTSVPCTE. 6 helical membrane passes run 55–75, 99–119, 178–198, 203–223, 282–302, and 320–340; these read AVAI…NLIF, AAEL…LSYT, IGLL…AFVV, TLIC…VAAV, LLGL…GLAF, and IFTV…LAPY. Residues 55–346 form the ABC transmembrane type-1 1 domain; it reads AVAILAACAS…LAPYSIEFSR (292 aa). The ABC transporter 1 domain occupies 381–626; sequence VELENVTFSY…DGVYAGLVKI (246 aa). N-linked (GlcNAc...) asparagine glycans are attached at residues N385 and N401. 416-423 is an ATP binding site; it reads GQSGSGKS. N488 and N632 each carry an N-linked (GlcNAc...) asparagine glycan. 2 consecutive transmembrane segments (helical) span residues 705–725 and 745–765; these read LVVL…AILM and FYAS…LAVG. Residues 705-992 form the ABC transmembrane type-1 2 domain; that stretch reads LVVLLGCLGG…LFQWSTSITK (288 aa). Residue N800 is glycosylated (N-linked (GlcNAc...) asparagine). A run of 4 helical transmembrane segments spans residues 824 to 844, 846 to 866, 931 to 951, and 955 to 975; these read IALV…AIAF, WKLG…AGMV, MICF…GFWY, and LVSL…SVFF. N995 carries an N-linked (GlcNAc...) asparagine glycan. Positions 1027 to 1280 constitute an ABC transporter 2 domain; it reads IAMDNVRFSY…GGLYRRMCEA (254 aa). 1062–1069 is an ATP binding site; the sequence is GSSGCGKS. An N-linked (GlcNAc...) asparagine glycan is attached at N1122.

This sequence belongs to the ABC transporter superfamily. ABCB family. Multidrug resistance exporter (TC 3.A.1.201) subfamily.

It localises to the cell membrane. In terms of biological role, pleiotropic ABC efflux transporter involved in the protection of the cells against a wide range of toxic compounds. In Emericella nidulans (strain FGSC A4 / ATCC 38163 / CBS 112.46 / NRRL 194 / M139) (Aspergillus nidulans), this protein is ABC multidrug transporter atrC.